The following is a 382-amino-acid chain: MKYELKTTSGNARRGRLTFSRPKGEYVVETPAFMPVGTYGTVKGMTPEEVAATGAQILLGNTFHLWLRPGQEVMKSHGDLHGFMQWHGPILTDSGGFQVFSLGKLRKIKEEGVTFQNPISGEKIFLSPEKSMEIQYDLGSDIVMIFDECTPYPATFDYAKNSMEMSLRWAKRSRDRFDELQNPRALFGIVQGGTYEELRKISAEGLVDIGFDGYAVGGLAVGEPKEEMHRILEFTTPLLPQDKPRYLMGVGKPEDLVEGVRRGIDMFDCVMPTRNARNGHLFVSNGIVKIRNAKYKTDTTPLDPECDCYTCKNYTKAYLYHLDKCGEILGARLNTIHNLRYYQRLMAQIRQAIEEDRFDDFVVEFYAKIGKEVPPLQSEVNK.

Residue Asp93 is the Proton acceptor of the active site. Substrate contacts are provided by residues 93–97, Asp147, Gln191, and Gly218; that span reads DSGGF. The RNA binding stretch occupies residues 249–255; sequence GVGKPED. Asp268 serves as the catalytic Nucleophile. The interval 273 to 277 is RNA binding; important for wobble base 34 recognition; that stretch reads TRNAR. Zn(2+) contacts are provided by Cys306, Cys308, Cys311, and His337.

This sequence belongs to the queuine tRNA-ribosyltransferase family. In terms of assembly, homodimer. Within each dimer, one monomer is responsible for RNA recognition and catalysis, while the other monomer binds to the replacement base PreQ1. The cofactor is Zn(2+).

It catalyses the reaction 7-aminomethyl-7-carbaguanine + guanosine(34) in tRNA = 7-aminomethyl-7-carbaguanosine(34) in tRNA + guanine. It functions in the pathway tRNA modification; tRNA-queuosine biosynthesis. Catalyzes the base-exchange of a guanine (G) residue with the queuine precursor 7-aminomethyl-7-deazaguanine (PreQ1) at position 34 (anticodon wobble position) in tRNAs with GU(N) anticodons (tRNA-Asp, -Asn, -His and -Tyr). Catalysis occurs through a double-displacement mechanism. The nucleophile active site attacks the C1' of nucleotide 34 to detach the guanine base from the RNA, forming a covalent enzyme-RNA intermediate. The proton acceptor active site deprotonates the incoming PreQ1, allowing a nucleophilic attack on the C1' of the ribose to form the product. After dissociation, two additional enzymatic reactions on the tRNA convert PreQ1 to queuine (Q), resulting in the hypermodified nucleoside queuosine (7-(((4,5-cis-dihydroxy-2-cyclopenten-1-yl)amino)methyl)-7-deazaguanosine). In Actinobacillus pleuropneumoniae serotype 3 (strain JL03), this protein is Queuine tRNA-ribosyltransferase.